We begin with the raw amino-acid sequence, 253 residues long: Imidazole glycerol phosphate synthase subunit HisF (253 aa).

Active-site residues include Asp11 and Asp130.

This sequence belongs to the HisA/HisF family. As to quaternary structure, heterodimer of HisH and HisF.

The protein resides in the cytoplasm. The catalysed reaction is 5-[(5-phospho-1-deoxy-D-ribulos-1-ylimino)methylamino]-1-(5-phospho-beta-D-ribosyl)imidazole-4-carboxamide + L-glutamine = D-erythro-1-(imidazol-4-yl)glycerol 3-phosphate + 5-amino-1-(5-phospho-beta-D-ribosyl)imidazole-4-carboxamide + L-glutamate + H(+). The protein operates within amino-acid biosynthesis; L-histidine biosynthesis; L-histidine from 5-phospho-alpha-D-ribose 1-diphosphate: step 5/9. In terms of biological role, IGPS catalyzes the conversion of PRFAR and glutamine to IGP, AICAR and glutamate. The HisF subunit catalyzes the cyclization activity that produces IGP and AICAR from PRFAR using the ammonia provided by the HisH subunit. In Clostridium botulinum (strain Okra / Type B1), this protein is Imidazole glycerol phosphate synthase subunit HisF.